The following is a 176-amino-acid chain: RNA pyrophosphohydrolase (176 aa).

The region spanning 6–149 is the Nudix hydrolase domain; that stretch reads GYRPNVGIVI…KRDVYRRVMK (144 aa). Positions 38-59 match the Nudix box motif; the sequence is GGINPGESAEQAMYRELFEEVG.

This sequence belongs to the Nudix hydrolase family. RppH subfamily. Requires a divalent metal cation as cofactor.

Its function is as follows. Accelerates the degradation of transcripts by removing pyrophosphate from the 5'-end of triphosphorylated RNA, leading to a more labile monophosphorylated state that can stimulate subsequent ribonuclease cleavage. The polypeptide is RNA pyrophosphohydrolase (Shigella boydii serotype 18 (strain CDC 3083-94 / BS512)).